A 256-amino-acid chain; its full sequence is Ubiquinone/menaquinone biosynthesis C-methyltransferase UbiE (256 aa).

Over residues 1-12 (MNDQRKGDHAEP) the composition is skewed to basic and acidic residues. The tract at residues 1–23 (MNDQRKGDHAEPTTHFGYQDVPE) is disordered. Residues T79, D100, and 128 to 129 (DA) each bind S-adenosyl-L-methionine.

Belongs to the class I-like SAM-binding methyltransferase superfamily. MenG/UbiE family.

The enzyme catalyses a 2-demethylmenaquinol + S-adenosyl-L-methionine = a menaquinol + S-adenosyl-L-homocysteine + H(+). It carries out the reaction a 2-methoxy-6-(all-trans-polyprenyl)benzene-1,4-diol + S-adenosyl-L-methionine = a 5-methoxy-2-methyl-3-(all-trans-polyprenyl)benzene-1,4-diol + S-adenosyl-L-homocysteine + H(+). It functions in the pathway quinol/quinone metabolism; menaquinone biosynthesis; menaquinol from 1,4-dihydroxy-2-naphthoate: step 2/2. It participates in cofactor biosynthesis; ubiquinone biosynthesis. Methyltransferase required for the conversion of demethylmenaquinol (DMKH2) to menaquinol (MKH2) and the conversion of 2-polyprenyl-6-methoxy-1,4-benzoquinol (DDMQH2) to 2-polyprenyl-3-methyl-6-methoxy-1,4-benzoquinol (DMQH2). This Pseudomonas putida (strain ATCC 700007 / DSM 6899 / JCM 31910 / BCRC 17059 / LMG 24140 / F1) protein is Ubiquinone/menaquinone biosynthesis C-methyltransferase UbiE.